The following is a 246-amino-acid chain: MGRGKVQLKRIENTINRQVTFSKRRSGLLKKANEISVLCDAEVALIIFSTKGKLYKYATDSCMDKILERYERYSYAEKVLISAESDTQGNWCHEYRKLKAKVETIQKCQKHLMGEDLESLNLKELQQLEQQLENSLKHIRSRKSQLMLESINELQRKEKSLQEENKVLQKELVEKQKVQKQQVQWDQTQPQTSSSSSSFMMREALPTTNISNYPAAAGERIEDVAAGQPQHVRIGLPPWMLSHING.

Positions 1 to 61 (MGRGKVQLKR…GKLYKYATDS (61 aa)) constitute an MADS-box domain. Positions 88–178 (QGNWCHEYRK…QKELVEKQKV (91 aa)) constitute a K-box domain. The interval 180–199 (KQQVQWDQTQPQTSSSSSSF) is disordered.

Highly expressed in sterile lemmas, at intermediate levels in stamens, and weakly in lemmas, paleas and carpels.

It localises to the nucleus. In terms of biological role, probable transcription factor. The sequence is that of MADS-box transcription factor 14 (MADS14) from Oryza sativa subsp. indica (Rice).